The sequence spans 585 residues: Putative sulfur deprivation response regulator (585 aa).

The next 5 helical transmembrane spans lie at Val-5–Ile-25, Ala-30–Ala-50, Val-83–Val-103, Phe-117–Ser-137, and Ile-162–Leu-182. 2 consecutive RCK C-terminal domains span residues Met-189–Leu-274 and Glu-288–Trp-372. A run of 5 helical transmembrane segments spans residues Leu-389–Val-409, Pro-411–Val-431, Ile-442–Ala-462, Val-482–Val-502, and Phe-561–Phe-581.

This sequence belongs to the CitM (TC 2.A.11) transporter family.

Its subcellular location is the membrane. Not known; mutations in SAC1 produces cells that cannot synthesize arylsulfatase and cannot take up sulfate as rapidly as wild-type cells. SAC1 is necessary for cells to survive sulfur deprivation. The polypeptide is Putative sulfur deprivation response regulator (SAC1) (Chlamydomonas reinhardtii (Chlamydomonas smithii)).